Consider the following 126-residue polypeptide: Cystatin-C (126 aa).

The N-terminal stretch at 1–18 is a signal peptide; sequence MKMLVFPVLAALFAVGLG. In terms of domain architecture, Cystatin spans 22-115; the sequence is GAPRDINISE…CTFSVWSRPW (94 aa). The Secondary area of contact signature appears at 64–68; it reads QVVSG. Disulfide bonds link Cys-82–Cys-92 and Cys-106–Cys-126.

It belongs to the cystatin family. Ubiquitously expressed in normal tissues including brain, eye, gill, heart, gullet, liver, spleen, stomach, pyloric ceca, intestine, kidney and muscle. Expressed, but not up-regulated, in lipopolysaccharide (LPS)-stimulated tissues including kidney, spleen, muscle and gill.

It is found in the secreted. Its function is as follows. Thiol protease inhibitor. Has high papain inhibitory activity and inhibits to a lesser extent fish cathepsins L, S, K, F, X and bovine cathepsin B in vitro. The sequence is that of Cystatin-C from Paralichthys olivaceus (Bastard halibut).